The sequence spans 392 residues: Formate-dependent phosphoribosylglycinamide formyltransferase (392 aa).

N(1)-(5-phospho-beta-D-ribosyl)glycinamide is bound by residues 20 to 21 (EL) and Glu80. Residues Arg112, Lys153, 158 to 163 (SSGKGQ), 193 to 196 (EGFV), and Glu201 each bind ATP. Positions 117-306 (RLAAEELGLP…EFALHVRAIL (190 aa)) constitute an ATP-grasp domain. 2 residues coordinate Mg(2+): Glu265 and Glu277. N(1)-(5-phospho-beta-D-ribosyl)glycinamide-binding positions include Asp284, Lys355, and 362–363 (RR).

Belongs to the PurK/PurT family. As to quaternary structure, homodimer.

It carries out the reaction N(1)-(5-phospho-beta-D-ribosyl)glycinamide + formate + ATP = N(2)-formyl-N(1)-(5-phospho-beta-D-ribosyl)glycinamide + ADP + phosphate + H(+). It functions in the pathway purine metabolism; IMP biosynthesis via de novo pathway; N(2)-formyl-N(1)-(5-phospho-D-ribosyl)glycinamide from N(1)-(5-phospho-D-ribosyl)glycinamide (formate route): step 1/1. Involved in the de novo purine biosynthesis. Catalyzes the transfer of formate to 5-phospho-ribosyl-glycinamide (GAR), producing 5-phospho-ribosyl-N-formylglycinamide (FGAR). Formate is provided by PurU via hydrolysis of 10-formyl-tetrahydrofolate. In Aeromonas salmonicida (strain A449), this protein is Formate-dependent phosphoribosylglycinamide formyltransferase.